Reading from the N-terminus, the 478-residue chain is Alcohol dehydrogenase (quinone), cytochrome c subunit (478 aa).

The first 36 residues, 1 to 36 (MLNALTRDRLVSEMKQGWKLAAAIGLMAVSFGAAHA), serve as a signal peptide directing secretion. At Gln37 the chain carries Pyrrolidone carboxylic acid. Cytochrome c domains are found at residues 42–145 (ALIK…MHGV), 189–304 (PEVA…KSMP), and 327–417 (GQGN…RKGW). Positions 56, 59, 60, 204, 207, 208, 340, 343, and 344 each coordinate heme c.

As to quaternary structure, the alcohol dehydrogenase multicomponent enzyme system is composed of a dehydrogenase subunit I (AdhA), a cytochrome c subunit II (AdhB) and a subunit III (AdhS). It depends on heme c as a cofactor.

Its subcellular location is the cell membrane. The catalysed reaction is ethanol + a ubiquinone = a ubiquinol + acetaldehyde. Its activity is regulated as follows. 2,6-dichloro-4-dicyanovinylphenol (PC16) and antimycin A inhibit ubiquinol oxidation activity more selectively than the ubiquinone reductase activity. Cytochrome c component of the alcohol dehydrogenase multicomponent enzyme system which is involved in the production of acetic acid and in the ethanol oxidase respiratory chain. Quinohemoprotein alcohol dehydrogenase (ADH) catalyzes the oxidation of ethanol to acetaldehyde by transferring electrons to the ubiquinone embedded in the membrane phospholipids. The electrons transfer from ethanol to membranous ubiquinone occurs from pyrroloquinoline quinone (PQQ) to one heme c in subunit I (AdhA), and finally to two heme c in subunit II (AdhB). Besides ubiquinone reduction, ADH also has a ubiquinol (QH2) oxidation reaction which mediates electron transfer from ubiquinol to the non-energy generating bypass oxidase system. The electrons transfer occurs from ubiquinol (QH2) to the additional heme c within subunit II (AdhB). Also able to use quinone analogs such as 2,3-dimethoxy-5-methyl-6-n-decyl-1,4-benzoquinone (DB) and 2,3-dimethoxy-5-methyl-6-n-pentyl-1,4-benzoquinone (PB). The sequence is that of Alcohol dehydrogenase (quinone), cytochrome c subunit from Gluconobacter oxydans (strain 621H) (Gluconobacter suboxydans).